Consider the following 1468-residue polypeptide: Centrosomal protein of 290 kDa (1468 aa).

7 coiled-coil regions span residues 1–25 (ERQL…VGEK), 52–121 (SLSE…IEQA), 172–292 (KMYE…DEKA), 318–528 (VASK…EAQK), 559–592 (RIIL…ILSR), 627–688 (HTLK…QADN), and 736–1441 (IKLK…SEQF). The interval 1060–1468 (TTGLTVDQVM…QENPVNFPIY (409 aa)) is self-association (with itself or N-terminus). Positions 1130–1152 (LSKDAYSRPSTSGIDSDDHYQRE) are disordered.

As to quaternary structure, part of the tectonic-like complex (also named B9 complex). Interacts with ATF4 via its N-terminal region. Associates with the BBSome complex, interacting (via N-terminus) with BBS4. Interacts with IQCB1/NPHP5; IQCB1 and CEP290/NPHP6 are proposed to form a functional NPHP5-6 module localized to the centrosome. Interacts with NPHP4; the interaction likely requires additional interactors. Interacts with ZNF423, FAM161A, CEP162, CEP162, CEP131, TALPID3, CCDC13, CC2D2A, RPGRIP1. Can self-associate (homo- or heteromeric). Interacts with CCP110; required for suppressing cilia formation. Interacts with RPGR. Associates (via C-terminus) with microtubules; association to microtubule is reduced in response to cellular stress, such as ultraviolet light (UV) radiation or heat shock, in a process that requires p38 MAP kinase signaling. Interacts with FAM161A. Interacts with PCM1. Interacts with CCDC66. Interacts with ARMC9 and CSPP1. In terms of processing, ubiquitinated. May undergo monoubiquitination; monoubiquitination is inhibited in response to cellular stress, such as ultraviolet light (UV) radiation or heat shock, but does not cause its displacement from centriolar satellites.

The protein resides in the cytoplasm. The protein localises to the cytoskeleton. It localises to the microtubule organizing center. It is found in the centrosome. Its subcellular location is the centriolar satellite. The protein resides in the nucleus. The protein localises to the cell projection. It localises to the cilium. It is found in the cilium basal body. Its subcellular location is the centriole. The protein resides in the cytoplasmic vesicle. Functionally, involved in early and late steps in cilia formation. Its association with CCP110 is required for inhibition of primary cilia formation by CCP110. May play a role in early ciliogenesis in the disappearance of centriolar satellites and in the transition of primary ciliar vesicles (PCVs) to capped ciliary vesicles (CCVs). Required for the centrosomal recruitment of RAB8A and for the targeting of centriole satellite proteins to centrosomes such as of PCM1. Required for the correct localization of ciliary and phototransduction proteins in retinal photoreceptor cells; may play a role in ciliary transport processes. Required for efficient recruitment of RAB8A to primary cilium. In the ciliary transition zone is part of the tectonic-like complex which is required for tissue-specific ciliogenesis and may regulate ciliary membrane composition. Involved in regulation of the BBSome complex integrity, specifically for presence of BBS2, BBS5 and BBS8/TTC8 in the complex, and in ciliary targeting of selected BBSome cargos. May play a role in controlling entry of the BBSome complex to cilia possibly implicating IQCB1/NPHP5. Activates ATF4-mediated transcription. This is Centrosomal protein of 290 kDa (CEP290) from Bos taurus (Bovine).